The chain runs to 486 residues: Monocarboxylate transporter 12 (486 aa).

At 1-9 the chain is on the cytoplasmic side; it reads MTKITRVGS. Helical transmembrane passes span 10 to 30, 58 to 78, 86 to 106, 115 to 135, 148 to 168, and 177 to 197; these read ASPP…LVTI, AWIH…GSVV, AGIM…SFAT, LGVL…AMVG, IAMS…QLLI, and LLIL…MRPI. Basic and acidic residues predominate over residues 201–220; sequence EDPSGPEKSHDRDAQREDCK. The disordered stretch occupies residues 201–221; it reads EDPSGPEKSHDRDAQREDCKQ. 6 helical membrane-spanning segments follow: residues 253–273, 289–309, 320–340, 353–373, 383–403, and 410–430; these read FVVL…LFVY, AFLM…FGWL, YVCY…LPML, FGYF…EIVG, VVYF…GWLV, and TAAF…LGFA. Over 431–486 the chain is Cytoplasmic; it reads KIAKRMKRTQVPFLVKDSDPKLHLWTNGSVAYSIAKELDQKDEESLAKARTGCNLT.

It belongs to the major facilitator superfamily. Monocarboxylate porter (TC 2.A.1.13) family. Interacts with isoform 2 of BSG; this interaction is required for its localization to the plasma membrane. In terms of tissue distribution, detected in kidney, choroid plexus, testis, lung, stomach, large and small intestine, spleen, fat and parotid gland. In eye, expressed in cornea, ciliary epithelium, lens epithelium and lens fiber.

It localises to the cell membrane. The protein localises to the basolateral cell membrane. It catalyses the reaction creatine(in) = creatine(out). The catalysed reaction is guanidinoacetate(in) = guanidinoacetate(out). With respect to regulation, creatine uptake is inhibited by carbonyl cyanide 3-chlorophenylhydrazone (CCCP) and by valinomycin. In terms of biological role, functions as a transporter for creatine and as well for its precursor guanidinoacetate. Transport of creatine and GAA is independent of resting membrane potential and extracellular Na(+), Cl(-), or pH. Contributes to the process of creatine biosynthesis and distribution. The polypeptide is Monocarboxylate transporter 12 (Rattus norvegicus (Rat)).